The primary structure comprises 356 residues: Proline-rich protein 19 (356 aa).

The segment covering 1–12 (MDTQGPVSQPFQ) has biased composition (polar residues). Disordered regions lie at residues 1-53 (MDTQ…RDPP), 95-143 (LVPG…ELSG), 216-255 (INSP…RGSL), and 312-331 (PSSP…SPPS). Residues 19 to 29 (RVRRRKTRRER) show a composition bias toward basic residues.

Interacts with CNTD1.

Its subcellular location is the nucleus. It is found in the chromosome. Functionally, promotes meiotic crossing over formation through its interaction with CNTD1 by participating in the crossover differentiation step of crossover-specific recombination intermediates. The polypeptide is Proline-rich protein 19 (Homo sapiens (Human)).